The sequence spans 576 residues: (E,E)-alpha-farnesene synthase (576 aa).

5 residues coordinate (2E,6E)-farnesyl diphosphate: arginine 289, aspartate 326, aspartate 330, arginine 468, and asparagine 471. 2 residues coordinate Mg(2+): aspartate 326 and aspartate 330. The DDXXD motif signature appears at 326–330 (DDVYD). Mg(2+) contacts are provided by asparagine 471, threonine 475, and glutamate 479. Residues aspartate 484 and serine 487 each contribute to the K(+) site.

This sequence belongs to the terpene synthase family. Tpsb subfamily. In terms of assembly, monomer. It depends on Mg(2+) as a cofactor. The cofactor is Mn(2+). Requires K(+) as cofactor.

It is found in the cytoplasm. The catalysed reaction is (2E,6E)-farnesyl diphosphate = (3E,6E)-alpha-farnesene + diphosphate. Sesquiterpene synthase catalyzing the production of (E,E)-alpha-farnesene, the predominant terpene produced during storage of fruits. Produces all six isomers (E,E)-alpha-farnesene, (Z,E)-alpha-farnesene, (E,Z)-alpha-farnesene, (Z,Z)-alpha-farnesene, (E)-beta-farnesene and (Z)-beta-farnesene from a mix of isomeric forms of the farnesyl diphosphate precursor. Able to convert geranyl diphosphate to the monoterpenes (E)-beta-ocimene, linalool and beta-myrcene. Also has a prenyltransferase activity producing alpha-farnesene directly from geranyl diphosphate and isoprenyl diphosphate. The chain is (E,E)-alpha-farnesene synthase (AFS1) from Malus domestica (Apple).